The following is a 147-amino-acid chain: Large ribosomal subunit protein uL13 (147 aa).

It belongs to the universal ribosomal protein uL13 family. In terms of assembly, part of the 50S ribosomal subunit.

In terms of biological role, this protein is one of the early assembly proteins of the 50S ribosomal subunit, although it is not seen to bind rRNA by itself. It is important during the early stages of 50S assembly. This is Large ribosomal subunit protein uL13 from Mycobacterium leprae (strain Br4923).